We begin with the raw amino-acid sequence, 439 residues long: Xylose isomerase (439 aa).

Active-site residues include histidine 101 and aspartate 104. 7 residues coordinate Mg(2+): glutamate 232, glutamate 268, histidine 271, aspartate 296, aspartate 307, aspartate 309, and aspartate 339.

The protein belongs to the xylose isomerase family. Homotetramer. It depends on Mg(2+) as a cofactor.

The protein resides in the cytoplasm. The catalysed reaction is alpha-D-xylose = alpha-D-xylulofuranose. The polypeptide is Xylose isomerase (Marinomonas sp. (strain MWYL1)).